A 314-amino-acid chain; its full sequence is Lipoyl synthase (314 aa).

[4Fe-4S] cluster is bound by residues cysteine 61, cysteine 66, cysteine 72, cysteine 87, cysteine 91, cysteine 94, and serine 301. A Radical SAM core domain is found at 73 to 290; the sequence is FGRGTATFMI…ERIATNLGFS (218 aa).

The protein belongs to the radical SAM superfamily. Lipoyl synthase family. [4Fe-4S] cluster is required as a cofactor.

It localises to the cytoplasm. It carries out the reaction [[Fe-S] cluster scaffold protein carrying a second [4Fe-4S](2+) cluster] + N(6)-octanoyl-L-lysyl-[protein] + 2 oxidized [2Fe-2S]-[ferredoxin] + 2 S-adenosyl-L-methionine + 4 H(+) = [[Fe-S] cluster scaffold protein] + N(6)-[(R)-dihydrolipoyl]-L-lysyl-[protein] + 4 Fe(3+) + 2 hydrogen sulfide + 2 5'-deoxyadenosine + 2 L-methionine + 2 reduced [2Fe-2S]-[ferredoxin]. It functions in the pathway protein modification; protein lipoylation via endogenous pathway; protein N(6)-(lipoyl)lysine from octanoyl-[acyl-carrier-protein]: step 2/2. In terms of biological role, catalyzes the radical-mediated insertion of two sulfur atoms into the C-6 and C-8 positions of the octanoyl moiety bound to the lipoyl domains of lipoate-dependent enzymes, thereby converting the octanoylated domains into lipoylated derivatives. This is Lipoyl synthase from Nitrosomonas eutropha (strain DSM 101675 / C91 / Nm57).